We begin with the raw amino-acid sequence, 101 residues long: Small ribosomal subunit protein uS14 (101 aa).

Belongs to the universal ribosomal protein uS14 family. As to quaternary structure, part of the 30S ribosomal subunit. Contacts proteins S3 and S10.

In terms of biological role, binds 16S rRNA, required for the assembly of 30S particles and may also be responsible for determining the conformation of the 16S rRNA at the A site. This is Small ribosomal subunit protein uS14 from Buchnera aphidicola subsp. Schizaphis graminum (strain Sg).